The sequence spans 118 residues: Large ribosomal subunit protein bL20 (118 aa).

It belongs to the bacterial ribosomal protein bL20 family.

Its function is as follows. Binds directly to 23S ribosomal RNA and is necessary for the in vitro assembly process of the 50S ribosomal subunit. It is not involved in the protein synthesizing functions of that subunit. This Thermotoga neapolitana (strain ATCC 49049 / DSM 4359 / NBRC 107923 / NS-E) protein is Large ribosomal subunit protein bL20.